Here is a 117-residue protein sequence, read N- to C-terminus: Large ribosomal subunit protein bL20 (117 aa).

It belongs to the bacterial ribosomal protein bL20 family.

Binds directly to 23S ribosomal RNA and is necessary for the in vitro assembly process of the 50S ribosomal subunit. It is not involved in the protein synthesizing functions of that subunit. The chain is Large ribosomal subunit protein bL20 from Nitratidesulfovibrio vulgaris (strain DSM 19637 / Miyazaki F) (Desulfovibrio vulgaris).